The following is a 362-amino-acid chain: 3-dehydroquinate synthase (362 aa).

NAD(+) contacts are provided by residues 71-76 (DGEQYK), 105-109 (GVVGD), 129-130 (TT), lysine 142, lysine 151, and 169-172 (CLKT). Residues glutamate 184, histidine 247, and histidine 264 each coordinate Zn(2+).

The protein belongs to the sugar phosphate cyclases superfamily. Dehydroquinate synthase family. The cofactor is Co(2+). Zn(2+) serves as cofactor. NAD(+) is required as a cofactor.

It localises to the cytoplasm. It carries out the reaction 7-phospho-2-dehydro-3-deoxy-D-arabino-heptonate = 3-dehydroquinate + phosphate. Its pathway is metabolic intermediate biosynthesis; chorismate biosynthesis; chorismate from D-erythrose 4-phosphate and phosphoenolpyruvate: step 2/7. Its function is as follows. Catalyzes the conversion of 3-deoxy-D-arabino-heptulosonate 7-phosphate (DAHP) to dehydroquinate (DHQ). This chain is 3-dehydroquinate synthase, found in Escherichia coli (strain 55989 / EAEC).